Consider the following 603-residue polypeptide: Pentatricopeptide repeat-containing protein At2g02980, chloroplastic (603 aa).

A chloroplast-targeting transit peptide spans Met-1–Lys-38. 10 PPR repeats span residues Asp-93–Pro-127, Asp-128–Asp-162, Asn-163–Pro-193, Cys-194–Pro-228, Asn-229–Lys-263, Tyr-264–Lys-294, Asp-295–Pro-329, Asp-330–Pro-365, Ser-366–Met-400, and His-432–Lys-466. The interval Leu-401–Asn-476 is type E motif. A type E(+) motif region spans residues Asn-477 to Lys-507. The interval Leu-508 to Trp-603 is type DYW motif.

This sequence belongs to the PPR family. PCMP-H subfamily.

Its subcellular location is the plastid. The protein resides in the chloroplast. Functionally, involved in RNA editing event in chloroplasts. Required for the editing of a single site in ndhD transcript, which is a plastid-encoded subunits of the chloroplast NAD(P)H dehydrogenase (NDH) complex. Not essential for the activity of the NDH complex of the photosynthetic electron transport chain. The polypeptide is Pentatricopeptide repeat-containing protein At2g02980, chloroplastic (PCMP-H26) (Arabidopsis thaliana (Mouse-ear cress)).